A 167-amino-acid chain; its full sequence is Zymogen granule membrane protein 16 (167 aa).

A signal peptide spans 1–16 (MLAIALLVLLCASASA). A Jacalin-type lectin domain is found at 24–159 (SSYSGEYGGK…IDAISLHWDT (136 aa)).

It belongs to the jacalin lectin family. Expressed in pancreas, colon, duodenum, and much less in stomach.

The protein resides in the secreted. It is found in the extracellular space. It localises to the extracellular matrix. The protein localises to the zymogen granule lumen. Its subcellular location is the golgi apparatus lumen. Its function is as follows. May play a role in protein trafficking. May act as a linker molecule between the submembranous matrix on the luminal side of zymogen granule membrane (ZGM) and aggregated secretory proteins during granule formation in the TGN. The polypeptide is Zymogen granule membrane protein 16 (Zg16) (Rattus norvegicus (Rat)).